We begin with the raw amino-acid sequence, 139 residues long: D-ribose pyranase (139 aa).

The active-site Proton donor is the histidine 20. Residues aspartate 28, histidine 106, and 128–130 (YAN) each bind substrate.

Belongs to the RbsD / FucU family. RbsD subfamily. Homodecamer.

The protein resides in the cytoplasm. It catalyses the reaction beta-D-ribopyranose = beta-D-ribofuranose. It participates in carbohydrate metabolism; D-ribose degradation; D-ribose 5-phosphate from beta-D-ribopyranose: step 1/2. Catalyzes the interconversion of beta-pyran and beta-furan forms of D-ribose. The polypeptide is D-ribose pyranase (Citrobacter koseri (strain ATCC BAA-895 / CDC 4225-83 / SGSC4696)).